Consider the following 446-residue polypeptide: Adenylosuccinate synthetase (446 aa).

Residues 12–18 (GDEGKGK) and 40–42 (GHT) contribute to the GTP site. The active-site Proton acceptor is the aspartate 13. Aspartate 13 and glycine 40 together coordinate Mg(2+). Residues 13 to 16 (DEGK), 38 to 41 (NAGH), threonine 128, arginine 142, glutamine 223, threonine 238, and arginine 302 contribute to the IMP site. The Proton donor role is filled by histidine 41. 298-304 (TTTGRRR) is a binding site for substrate. Residues arginine 304, 330–332 (KLD), and 412–414 (SLG) contribute to the GTP site.

The protein belongs to the adenylosuccinate synthetase family. As to quaternary structure, homodimer. Requires Mg(2+) as cofactor.

Its subcellular location is the cytoplasm. The enzyme catalyses IMP + L-aspartate + GTP = N(6)-(1,2-dicarboxyethyl)-AMP + GDP + phosphate + 2 H(+). The protein operates within purine metabolism; AMP biosynthesis via de novo pathway; AMP from IMP: step 1/2. Its function is as follows. Plays an important role in the de novo pathway of purine nucleotide biosynthesis. Catalyzes the first committed step in the biosynthesis of AMP from IMP. This Acaryochloris marina (strain MBIC 11017) protein is Adenylosuccinate synthetase.